The primary structure comprises 267 residues: 4-hydroxy-2-oxo-heptane-1,7-dioate aldolase (267 aa).

The active-site Proton acceptor is the H45. Residue Q147 participates in substrate binding. An a divalent metal cation-binding site is contributed by E149. Substrate is bound by residues A174 and D175. Residue D175 participates in a divalent metal cation binding.

The protein belongs to the HpcH/HpaI aldolase family. Homohexamer; trimer of dimers. A divalent metal cation serves as cofactor.

It catalyses the reaction 4-hydroxy-2-oxoheptanedioate = succinate semialdehyde + pyruvate. Its pathway is aromatic compound metabolism; 4-hydroxyphenylacetate degradation; pyruvate and succinate semialdehyde from 4-hydroxyphenylacetate: step 7/7. Catalyzes the reversible retro-aldol cleavage of 4-hydroxy-2-ketoheptane-1,7-dioate (HKHD) to pyruvate and succinic semialdehyde. The polypeptide is 4-hydroxy-2-oxo-heptane-1,7-dioate aldolase (Shigella flexneri).